We begin with the raw amino-acid sequence, 143 residues long: Large ribosomal subunit protein uL16 (143 aa).

The protein belongs to the universal ribosomal protein uL16 family. In terms of assembly, part of the 50S ribosomal subunit.

Its function is as follows. Binds 23S rRNA and is also seen to make contacts with the A and possibly P site tRNAs. The chain is Large ribosomal subunit protein uL16 from Tropheryma whipplei (strain TW08/27) (Whipple's bacillus).